The following is a 435-amino-acid chain: Mitochondrial association factor 1 form a1 (435 aa).

The first 20 residues, Met-1–Gly-20, serve as a signal peptide directing secretion. Residues Ala-21–Arg-95 are Vacuolar-facing. The tract at residues Gly-43–Thr-88 is disordered. Over residues Val-55–Glu-64 the composition is skewed to basic and acidic residues. The chain crosses the membrane as a helical span at residues Arg-96–Leu-116. At Arg-117–Asp-435 the chain is on the cytoplasmic side. The tract at residues Arg-120–Pro-162 is disordered. Low complexity predominate over residues Pro-141–Pro-153.

As to quaternary structure, interacts with host SAMM50.

It localises to the parasitophorous vacuole membrane. During host cell infection by tachyzoites, does not play a role in tethering the parasitophorous vacuole to the host mitochondria, probably because it does not bind host mitochondrial import protein TOMM70. The chain is Mitochondrial association factor 1 form a1 from Toxoplasma gondii.